We begin with the raw amino-acid sequence, 382 residues long: Na(+)/H(+) antiporter NhaA (382 aa).

A run of 10 helical transmembrane segments spans residues 5 to 25 (INLL…ALAW), 42 to 62 (FGGV…FFGI), 88 to 108 (LATL…NAVI), 116 to 136 (GWGI…RLVF), 145 to 165 (FLLL…AVFY), 169 to 189 (VHPT…AAYI), 261 to 281 (IVVD…RFSS), 282 to 302 (VGTA…AGIL), 327 to 347 (TGLV…VAFV), and 353 to 373 (GAAK…VALG).

Belongs to the NhaA Na(+)/H(+) (TC 2.A.33) antiporter family.

The protein localises to the cell inner membrane. The enzyme catalyses Na(+)(in) + 2 H(+)(out) = Na(+)(out) + 2 H(+)(in). Functionally, na(+)/H(+) antiporter that extrudes sodium in exchange for external protons. The polypeptide is Na(+)/H(+) antiporter NhaA (Geobacter metallireducens (strain ATCC 53774 / DSM 7210 / GS-15)).